Reading from the N-terminus, the 138-residue chain is Basic phospholipase A2 BP-III (138 aa).

The N-terminal stretch at 1 to 16 (MRTLWIMAVLLVGVDG) is a signal peptide. 7 disulfides stabilise this stretch: C42–C132, C44–C60, C59–C112, C65–C138, C66–C105, C73–C98, and C91–C103. 2 residues coordinate Ca(2+): G45 and G47. H63 is an active-site residue. The active site involves D106.

It belongs to the phospholipase A2 family. Group II subfamily. K49 sub-subfamily. Ca(2+) serves as cofactor. In terms of tissue distribution, expressed by the venom gland.

The protein resides in the secreted. The enzyme catalyses a 1,2-diacyl-sn-glycero-3-phosphocholine + H2O = a 1-acyl-sn-glycero-3-phosphocholine + a fatty acid + H(+). Its function is as follows. Snake venom phospholipase A2 (PLA2) that has low phospholipase A2 activity. Shows anticoagulant activities, strong myolytic activity, infiltration of polymorphonuclear cells, and edema in stromal tissues. Induces cell death of Jurkat cells in a concentration dependent manner. PLA2 catalyzes the calcium-dependent hydrolysis of the 2-acyl groups in 3-sn-phosphoglycerides. The chain is Basic phospholipase A2 BP-III from Protobothrops flavoviridis (Habu).